Consider the following 746-residue polypeptide: MVLQARSKHRDAAPRPPRPARSSPPPLNGASEVAARELGPERAPPSPGRRSTASRKGPRAETAAPAPDGLAGRLAAGLHWALGLRRGRGRTWSTLLLASFAALLHWSHITQLFENDRHFSHLSTLEREMAFRTEMGLYYSYFKTIVEAPSFLSGVWMIMNDRLTEYPLVINTLKRFNLYPEVILASWYRIYTKIMDLIGIQTKICWTVTRGEGLSPIESCEGLGDPACFYVAVIFMLNGLMMALFFIYGTYLSGSRLGGLVTVLCFFFNHGECTRVMWTPPLRESFSYPFLVLQMLLVTHILRTTQLYRGSLIALCISNVFFMLPWQFAQFVLLTQIASLFAVYVVGYIDTYKLQKIIYTHMISLVLCFVLMFGNSMLLTSYYASSLVIIWGMLAMKPQFLKMNVSELSLWVIQGCCWLFGTVTLKSLTSRIFGIADDAHIGNLLTSKFFSYKDFDTLLYTCAAEFDFMEKETPLRYTKTLLLPVVLAIVAAIGRKIINDMRGVIANQETDVRKHQVDHGELVYHALQLFAYTALGILIMRLKLFLTPHMCVMASLICSRQLFGWLFGKVHPGAVVFAVLAAMSIQGSANLQTQWNIVGEFSNLPQEELIEWIRHSTKPDAVFAGAMPTMASVKLSALRPVVNHPHYEDAGLRARTKIVYSMYSRKAPEDVKKELIKLKVNYYILEESWCIRRSKPGCSMPEIWDVEDPDNAGKTPLCNILVKDSKPHFTTVFQNSVYKVLEVIRQ.

Residues 1–68 (MVLQARSKHR…RAETAAPAPD (68 aa)) form a disordered region. The span at 14 to 27 (PRPPRPARSSPPPL) shows a compositional bias: pro residues. A run of 12 helical transmembrane segments spans residues 93–113 (STLL…TQLF), 139–159 (YSYF…WMIM), 227–247 (ACFY…LFFI), 248–268 (YGTY…CFFF), 308–328 (YRGS…PWQF), 329–349 (AQFV…VGYI), 357–377 (IIYT…GNSM), 378–398 (LLTS…AMKP), 405–425 (VSEL…TVTL), 481–501 (LLLP…INDM), 520–540 (GELV…ILIM), and 562–582 (LFGW…VLAA).

The protein belongs to the dpy-19 family.

It localises to the endoplasmic reticulum membrane. The catalysed reaction is L-tryptophyl-[protein] + a di-trans,poly-cis-dolichyl beta-D-mannosyl phosphate = C-alpha-D-mannosyl-L-tryptophyl-[protein] + a di-trans,poly-cis-dolichyl phosphate + H(+). The protein operates within protein modification; protein glycosylation. Functionally, C-mannosyltransferase that mediates the C-mannosylation tryptophan residues on target proteins. The reaction occurs on the luminal side of the endoplasmic reticulum and involves the transfer of a mannose unit from a dolichylphosphate mannose (Dol-P-Man) donor to an acceptor protein containing a WxxW consensus sequence. C-mannosylates the first two tryptophans in the WxxWxxWxxC sequence motif in thrombospondin (TSP) type-1 repeats of UNC5A. Regulates neurite extension during development. The sequence is that of Protein C-mannosyl-transferase DPY19L1 (Dpy19l1) from Rattus norvegicus (Rat).